Here is a 383-residue protein sequence, read N- to C-terminus: Acetylornithine deacetylase (383 aa).

Histidine 80 lines the Zn(2+) pocket. The active site involves aspartate 82. Residue aspartate 112 participates in Zn(2+) binding. Residue glutamate 144 is part of the active site. Positions 145, 169, and 355 each coordinate Zn(2+).

This sequence belongs to the peptidase M20A family. ArgE subfamily. In terms of assembly, homodimer. Zn(2+) is required as a cofactor. It depends on Co(2+) as a cofactor. Requires glutathione as cofactor.

The protein resides in the cytoplasm. The catalysed reaction is N(2)-acetyl-L-ornithine + H2O = L-ornithine + acetate. It participates in amino-acid biosynthesis; L-arginine biosynthesis; L-ornithine from N(2)-acetyl-L-ornithine (linear): step 1/1. Its function is as follows. Catalyzes the hydrolysis of the amide bond of N(2)-acetylated L-amino acids. Cleaves the acetyl group from N-acetyl-L-ornithine to form L-ornithine, an intermediate in L-arginine biosynthesis pathway, and a branchpoint in the synthesis of polyamines. The sequence is that of Acetylornithine deacetylase from Salmonella typhi.